The sequence spans 431 residues: Enolase (431 aa).

Q166 provides a ligand contact to (2R)-2-phosphoglycerate. The active-site Proton donor is the E208. Mg(2+)-binding residues include D245, E288, and D315. (2R)-2-phosphoglycerate contacts are provided by K340, R369, S370, and K391. Catalysis depends on K340, which acts as the Proton acceptor.

The protein belongs to the enolase family. Requires Mg(2+) as cofactor.

Its subcellular location is the cytoplasm. It localises to the secreted. It is found in the cell surface. The enzyme catalyses (2R)-2-phosphoglycerate = phosphoenolpyruvate + H2O. Its pathway is carbohydrate degradation; glycolysis; pyruvate from D-glyceraldehyde 3-phosphate: step 4/5. Catalyzes the reversible conversion of 2-phosphoglycerate (2-PG) into phosphoenolpyruvate (PEP). It is essential for the degradation of carbohydrates via glycolysis. This chain is Enolase, found in Clostridium botulinum (strain Kyoto / Type A2).